The following is a 197-amino-acid chain: Dephospho-CoA kinase (197 aa).

One can recognise a DPCK domain in the interval 3–197; it reads IIGLTGGIAS…IEEIWAKRFP (195 aa). 11–16 provides a ligand contact to ATP; it reads ASGKST.

The protein belongs to the CoaE family.

It is found in the cytoplasm. It catalyses the reaction 3'-dephospho-CoA + ATP = ADP + CoA + H(+). It functions in the pathway cofactor biosynthesis; coenzyme A biosynthesis; CoA from (R)-pantothenate: step 5/5. Catalyzes the phosphorylation of the 3'-hydroxyl group of dephosphocoenzyme A to form coenzyme A. In Geobacter sulfurreducens (strain ATCC 51573 / DSM 12127 / PCA), this protein is Dephospho-CoA kinase.